A 435-amino-acid polypeptide reads, in one-letter code: D-amino acid dehydrogenase (435 aa).

Val3–Trp17 is a binding site for FAD.

It belongs to the DadA oxidoreductase family. The cofactor is FAD.

The catalysed reaction is a D-alpha-amino acid + A + H2O = a 2-oxocarboxylate + AH2 + NH4(+). It participates in amino-acid degradation; D-alanine degradation; NH(3) and pyruvate from D-alanine: step 1/1. Oxidative deamination of D-amino acids. The sequence is that of D-amino acid dehydrogenase from Xylella fastidiosa (strain 9a5c).